A 147-amino-acid polypeptide reads, in one-letter code: Helix-loop-helix protein 13 (147 aa).

Residues 41–93 (EERQTASIRERKRMCSINVAFIELRNYIPTFPYEKRLSKIDTLNLAIAYINML) enclose the bHLH domain.

As to expression, expressed in hermaphrodite dopaminergic neurons (ADE, CEP, and PDE).

The protein localises to the nucleus. The protein resides in the cytoplasm. Transcriptional activator. Shown to have a role in the negative regulation of exit from L1 arrest and dauer diapause dependent on IIS signaling (insulin and insulin-like growth factor (IGF) signaling). Hypodermal expression is regulated by IIS/daf-16 while neuronal expression is not under the control of IIS/daf-16. The sequence is that of Helix-loop-helix protein 13 from Caenorhabditis elegans.